The chain runs to 587 residues: Glutamine--tRNA ligase (587 aa).

A 'HIGH' region motif is present at residues 58 to 68 (PEPNGYLHIGH). Residues 59–61 (EPN) and 65–71 (HIGHAKS) each bind ATP. L-glutamine-binding residues include Asp-91 and Tyr-240. Residues Thr-259 and 294–295 (RL) contribute to the ATP site. The 'KMSKS' region motif lies at 301 to 305 (VTSKR).

The protein belongs to the class-I aminoacyl-tRNA synthetase family. As to quaternary structure, monomer.

It localises to the cytoplasm. The catalysed reaction is tRNA(Gln) + L-glutamine + ATP = L-glutaminyl-tRNA(Gln) + AMP + diphosphate. The chain is Glutamine--tRNA ligase from Bordetella parapertussis (strain 12822 / ATCC BAA-587 / NCTC 13253).